The primary structure comprises 412 residues: Serine hydroxymethyltransferase (412 aa).

Residues Leu-117 and 121–123 contribute to the (6S)-5,6,7,8-tetrahydrofolate site; that span reads GHL. At Lys-226 the chain carries N6-(pyridoxal phosphate)lysine.

It belongs to the SHMT family. In terms of assembly, homodimer. Pyridoxal 5'-phosphate is required as a cofactor.

The protein resides in the cytoplasm. The enzyme catalyses (6R)-5,10-methylene-5,6,7,8-tetrahydrofolate + glycine + H2O = (6S)-5,6,7,8-tetrahydrofolate + L-serine. It participates in one-carbon metabolism; tetrahydrofolate interconversion. Its pathway is amino-acid biosynthesis; glycine biosynthesis; glycine from L-serine: step 1/1. Its function is as follows. Catalyzes the reversible interconversion of serine and glycine with tetrahydrofolate (THF) serving as the one-carbon carrier. This reaction serves as the major source of one-carbon groups required for the biosynthesis of purines, thymidylate, methionine, and other important biomolecules. Also exhibits THF-independent aldolase activity toward beta-hydroxyamino acids, producing glycine and aldehydes, via a retro-aldol mechanism. This Natranaerobius thermophilus (strain ATCC BAA-1301 / DSM 18059 / JW/NM-WN-LF) protein is Serine hydroxymethyltransferase.